A 240-amino-acid polypeptide reads, in one-letter code: Protein OXIDATIVE STRESS 3 LIKE 4 (240 aa).

The disordered stretch occupies residues 1 to 128 (MELMAKPTFS…SKSFGNLGEI (128 aa)). Residues 51-66 (WSGQTADYSSDSSSIG) are compositionally biased toward polar residues. Residues 70–84 (DSEEDEEESENENDD) are compositionally biased toward acidic residues. Residues 142–150 (NKRRRLQIC) carry the Nuclear localization signal motif. The disordered stretch occupies residues 163 to 207 (NPKSMPLLPVNEDEDDDDEDDDEEDLKSGFDENKSSSDEEGVKKV). Acidic residues predominate over residues 173–187 (NEDEDDDDEDDDEED). Residues 188–205 (LKSGFDENKSSSDEEGVK) are compositionally biased toward basic and acidic residues. The interval 202–229 (EGVKKVVVRKGSFKNRAYKSRSCFALSD) is kinase-inducible domain (KID). Ser213 bears the Phosphoserine mark.

Interacts with HDA19; Ser-213 is critical for this interaction.

It is found in the nucleus. Its function is as follows. Transcription activator which may regulates gene expression through interaction with the histone deacetylase HDA19. Promotes slightly the tolerance to cadmium (Cd) and to oxidizing chemicals (e.g. diamide and tert-butyl hydroperoxide (t-BOOH)). In Arabidopsis thaliana (Mouse-ear cress), this protein is Protein OXIDATIVE STRESS 3 LIKE 4.